A 64-amino-acid polypeptide reads, in one-letter code: Large ribosomal subunit protein bL33 (64 aa).

The protein belongs to the bacterial ribosomal protein bL33 family.

The chain is Large ribosomal subunit protein bL33 from Gloeothece citriformis (strain PCC 7424) (Cyanothece sp. (strain PCC 7424)).